A 374-amino-acid chain; its full sequence is MRTGRYIGIMSGTSLDGIDVVLAAIDEHTVAQQARYCHPIPMPIKQQILAMCQGQAVTLSRFGQLDTRLGILFAEAVLCLLQQTGVAPHEVTAIACHGQTVWHEPEGVAPCTLQIGDNNCIAAMTGITTVGDFRRRDMALGGQGAPLMPAFHHALLAHPQERRMVLNIGGIANLSLLLPGQPIRGYDTGPGNMLLDAWTWRHRKAPYDKDGRWARSGQVHQSLLQHLLADDYFLRAAPKSTGREYFNLGWLERKLSRLGPVPAQDVQATLVELTARTIAQQVLLCGGCEHLLVCGGGVRNPLVMNRLSALLPGIEVSPTDKFGVSGDDMEALAFAWLAFRTLSGLPGNLPSVTGAREETLLGAIYPVMPATEKT.

12–19 (GTSLDGID) contributes to the ATP binding site.

The protein belongs to the anhydro-N-acetylmuramic acid kinase family.

It catalyses the reaction 1,6-anhydro-N-acetyl-beta-muramate + ATP + H2O = N-acetyl-D-muramate 6-phosphate + ADP + H(+). The protein operates within amino-sugar metabolism; 1,6-anhydro-N-acetylmuramate degradation. It functions in the pathway cell wall biogenesis; peptidoglycan recycling. Catalyzes the specific phosphorylation of 1,6-anhydro-N-acetylmuramic acid (anhMurNAc) with the simultaneous cleavage of the 1,6-anhydro ring, generating MurNAc-6-P. Is required for the utilization of anhMurNAc either imported from the medium or derived from its own cell wall murein, and thus plays a role in cell wall recycling. The protein is Anhydro-N-acetylmuramic acid kinase of Sodalis glossinidius (strain morsitans).